The chain runs to 335 residues: ATP-dependent 6-phosphofructokinase (335 aa).

ATP is bound at residue Gly11. Residue 21-25 participates in ADP binding; sequence RAVVR. Residues 72–73 and 102–105 contribute to the ATP site; these read RY and GDGS. Mg(2+) is bound at residue Asp103. Substrate is bound at residue 125–127; the sequence is TID. Residue Asp127 is the Proton acceptor of the active site. Arg154 is a binding site for ADP. Residues Arg162 and 169–171 contribute to the substrate site; that span reads MGR. Residues 185 to 187 and 213 to 215 each bind ADP; these read GAD and KKH. Substrate-binding positions include Glu222, Arg244, and 250-253; that span reads HIQR.

Belongs to the phosphofructokinase type A (PFKA) family. ATP-dependent PFK group I subfamily. Prokaryotic clade 'B1' sub-subfamily. As to quaternary structure, homotetramer. It depends on Mg(2+) as a cofactor.

The protein resides in the cytoplasm. It carries out the reaction beta-D-fructose 6-phosphate + ATP = beta-D-fructose 1,6-bisphosphate + ADP + H(+). It participates in carbohydrate degradation; glycolysis; D-glyceraldehyde 3-phosphate and glycerone phosphate from D-glucose: step 3/4. Allosterically activated by ADP and other diphosphonucleosides, and allosterically inhibited by phosphoenolpyruvate. Its function is as follows. Catalyzes the phosphorylation of D-fructose 6-phosphate to fructose 1,6-bisphosphate by ATP, the first committing step of glycolysis. This Streptococcus pneumoniae (strain ATCC BAA-255 / R6) protein is ATP-dependent 6-phosphofructokinase.